Reading from the N-terminus, the 212-residue chain is Root-specific lectin (212 aa).

An N-terminal signal peptide occupies residues M1–A26. Q27 carries the pyrrolidone carboxylic acid modification. 4 Chitin-binding type-1 domains span residues Q27–T68, S69–A111, D112–T154, and D155–G197. 16 disulfides stabilise this stretch: C29/C44, C38/C50, C43/C57, C61/C66, C72/C87, C81/C93, C86/C100, C104/C109, C115/C130, C124/C136, C129/C143, C147/C152, C158/C173, C167/C179, C172/C186, and C190/C195. Residue M36 to C38 coordinates substrate. S88–Y99 is a substrate binding site. S140–E141 is a binding site for substrate. N206 carries N-linked (GlcNAc...) asparagine glycosylation.

As to expression, in roots.

Carbohydrate binding. In Hordeum vulgare (Barley), this protein is Root-specific lectin.